Reading from the N-terminus, the 279-residue chain is NADH dehydrogenase [ubiquinone] iron-sulfur protein 3, mitochondrial (279 aa).

Residues 1–27 constitute a mitochondrion transit peptide; the sequence is MISRTLLKRSLPTVQFLRPFTRSSIRR. Positions 249–279 are disordered; it reads EPVGEGKDFTPESFKLPTPEPEPEKESDEKK. Positions 270–279 are enriched in basic and acidic residues; that stretch reads EPEKESDEKK.

This sequence belongs to the complex I 30 kDa subunit family. In terms of assembly, core subunit of respiratory chain NADH dehydrogenase (Complex I).

The protein localises to the mitochondrion inner membrane. It carries out the reaction a ubiquinone + NADH + 5 H(+)(in) = a ubiquinol + NAD(+) + 4 H(+)(out). Core subunit of the mitochondrial membrane respiratory chain NADH dehydrogenase (Complex I) which catalyzes electron transfer from NADH through the respiratory chain, using ubiquinone as an electron acceptor. Plays a role in cell wall integrity and is involved in osmotic and oxidative resistance, yeast to hypha transition and the ability to damage and invade oral epithelial cells. The protein is NADH dehydrogenase [ubiquinone] iron-sulfur protein 3, mitochondrial (ALI1) of Candida albicans (strain SC5314 / ATCC MYA-2876) (Yeast).